Consider the following 1161-residue polypeptide: MVTTIVIACTFRAGTTHHSWCAAVALRAGSFAADDKSLLARFYHADRALTAIASELDSFDGRAEPVRCTRLVSRLRQGQDRVLAITNQIMDELLGDDRAQRAFRVKFPEEVLQESLAGQLWFGAECLAAGSSILNREAESAKMRPLAKAVTKSLEIVRNRLREQCLRNNTPNSPTLRLDINDAATEQLYESLKIFDRLFAEFELVYVSAMVQVKTKQEYEMQELICVLFSETLQRALKTGLLEQEQVDSYDPALMFSIPRLAIIAGLVIFREGPLNMDQPADNISEMFRPFRKLLIKMRDLLHALTKQELYQLEKLLCTNEEISASEQLICDEKGRSGGDGGSGSGGTAAAGVKEFDALEPVGESQEHVVIVTTVTTTNAPNVVGDGPGATGCTDATSGADGRLHIVSQGYGVSTGATGSSGFGSGRGGCSSSSTSRPKQRHNQAHLRQRGAPRHSSQSFAPEASYAGDDREPVVEEDNNNHLRKEIEEEDVDDDMEEEEEDEEEDEVDDDAMLKDGLVTTDCASGYLIPNTNFGNLLQTNEAPLTDSFIATDDELRLLGAETASSPPAMTQANIDSILAASAAGSGGQQQQQQQQQLIDSDSGHGTANHSTDMSPELETERTVVAAGQPNANDAPLDGSVSKQQPVRDRSRSGSSTVHKHAEISESSSDYEEADVDDEPDDVDADDDDEEEDDVVGEVEEQNDSEPTFNRKVGGAPKEAFRSQLRCKAARNHRKSSHHRPRPSTSSSSSSAAYRNKSQSHQHHHHHHHHHHHSYAESAEGTSSVVSTITTSNNSTSNGSTRHHSRMQQQHQQHQQQRNSSSSCDTSPTQSECSDAQEVALAIRAAGRNKFKSTENLLHRLFVCIAGVADQLQTNFAADLRKMLRSVFIMNSSPPEPDEPPEPSGSEEESKDSQHNHPSDLFEFRASEQDVITADQQNHSGGSSQSIYSAEEANPEQDSVFGSSGDSSPVRRTASVESRNVTVNVSVSVVASSPVGAGGAGGGGMVGGSRTGQERSVSLSEACIVVEGGKASAGGGGGTRRHSASGSKNDYGRSRSSPSSPVNSNTGGGGGGNHHSSAHHTAHEQQRRMPEEPPRWIPDCDAPRCMACASAFTPFRRRHHCRNCGGVFCGVCSNLSKPLPKYGLTKAVRVCRDCYIHEVGV.

Disordered regions lie at residues 417 to 510 (ATGS…EVDD), 583 to 831 (AAGS…PTQS), 890 to 918 (MNSSPPEPDEPPEPSGSEEESKDSQHNHP), 935 to 978 (DQQN…SVES), 992 to 1014 (SSPVGAGGAGGGGMVGGSRTGQE), and 1029 to 1095 (GKAS…EPPR). Over residues 419 to 429 (GSSGFGSGRGG) the composition is skewed to gly residues. Basic residues predominate over residues 438-453 (PKQRHNQAHLRQRGAP). The segment covering 468 to 487 (GDDREPVVEEDNNNHLRKEI) has biased composition (basic and acidic residues). A compositionally biased stretch (acidic residues) spans 488 to 510 (EEEDVDDDMEEEEEDEEEDEVDD). The span at 583–601 (AAGSGGQQQQQQQQQLIDS) shows a compositional bias: low complexity. Residues 669 to 704 (SDYEEADVDDEPDDVDADDDDEEEDDVVGEVEEQND) are compositionally biased toward acidic residues. Residues 728–742 (KAARNHRKSSHHRPR) are compositionally biased toward basic residues. Positions 743-757 (PSTSSSSSSAAYRNK) are enriched in low complexity. The span at 758–773 (SQSHQHHHHHHHHHHH) shows a compositional bias: basic residues. Low complexity-rich tracts occupy residues 781–800 (GTSSVVSTITTSNNSTSNGS) and 807–831 (MQQQHQQHQQQRNSSSSCDTSPTQS). Over residues 896–910 (EPDEPPEPSGSEEES) the composition is skewed to acidic residues. Polar residues-rich tracts occupy residues 935 to 948 (DQQNHSGGSSQSIY) and 956 to 967 (EQDSVFGSSGDS). The segment covering 996–1010 (GAGGAGGGGMVGGSR) has biased composition (gly residues). Residues 1054–1065 (SRSSPSSPVNSN) are compositionally biased toward low complexity. Basic and acidic residues predominate over residues 1081-1094 (TAHEQQRRMPEEPP). Residues 1099 to 1159 (DCDAPRCMAC…VCRDCYIHEV (61 aa)) form an FYVE-type zinc finger. Zn(2+) is bound by residues Cys-1105, Cys-1108, Cys-1121, Cys-1124, Cys-1129, Cys-1132, Cys-1151, and Cys-1154.

It belongs to the lst-2 family.

Functionally, negative regulator of epidermal growth factor receptor (EGFR) signaling. The chain is Lateral signaling target protein 2 homolog from Anopheles gambiae (African malaria mosquito).